The chain runs to 86 residues: Toxin Td8 (86 aa).

An N-terminal signal peptide occupies residues 1–20 (MTRFVLFLSCFFLIGMVVEC). Positions 21-83 (KDGYLVGDDG…IWNSATNRCR (63 aa)) constitute an LCN-type CS-alpha/beta domain. 4 cysteine pairs are disulfide-bonded: cysteine 31/cysteine 82, cysteine 35/cysteine 57, cysteine 43/cysteine 63, and cysteine 47/cysteine 65. An Arginine amide modification is found at arginine 83.

As to expression, expressed by the venom gland.

The protein resides in the secreted. In terms of biological role, beta toxins bind voltage-independently at site-4 of sodium channels (Nav) and shift the voltage of activation toward more negative potentials thereby affecting sodium channel activation and promoting spontaneous and repetitive firing. The protein is Toxin Td8 of Tityus discrepans (Venezuelan scorpion).